Here is a 144-residue protein sequence, read N- to C-terminus: Protein MIX23 (144 aa).

At alanine 2 the chain carries N-acetylalanine. The stretch at 82–120 forms a coiled coil; that stretch reads VKNLREEREKNLDDLTLLKQLRKEQTKLKWMQSELNVEE. N6-acetyllysine is present on lysine 100.

It belongs to the MIX23 family.

The sequence is that of Protein MIX23 from Homo sapiens (Human).